A 59-amino-acid polypeptide reads, in one-letter code: Photosystem II reaction center protein K (59 aa).

Positions 1-22 (MLNIFSLICLNSDLYSSRFFLA) are excised as a propeptide. Residues 38 to 58 (MPVIPLFFLLLAFVWQAAVSF) traverse the membrane as a helical segment.

The protein belongs to the PsbK family. PSII is composed of 1 copy each of membrane proteins PsbA, PsbB, PsbC, PsbD, PsbE, PsbF, PsbH, PsbI, PsbJ, PsbK, PsbL, PsbM, PsbT, PsbX, PsbY, PsbZ, Psb30/Ycf12, at least 3 peripheral proteins of the oxygen-evolving complex and a large number of cofactors. It forms dimeric complexes.

It is found in the plastid. The protein resides in the chloroplast thylakoid membrane. Functionally, one of the components of the core complex of photosystem II (PSII). PSII is a light-driven water:plastoquinone oxidoreductase that uses light energy to abstract electrons from H(2)O, generating O(2) and a proton gradient subsequently used for ATP formation. It consists of a core antenna complex that captures photons, and an electron transfer chain that converts photonic excitation into a charge separation. In Oenothera elata subsp. hookeri (Hooker's evening primrose), this protein is Photosystem II reaction center protein K.